Here is a 389-residue protein sequence, read N- to C-terminus: Sinapine esterase (389 aa).

The N-terminal stretch at 1–25 is a signal peptide; it reads MASSLKKLITSFLLFFFYTIIVASS. The active-site Nucleophile is the Ser-41. Asn-104, Asn-137, and Asn-320 each carry an N-linked (GlcNAc...) asparagine glycan. Active-site residues include Asp-345 and His-348. Residues Asn-372 and Asn-383 are each glycosylated (N-linked (GlcNAc...) asparagine).

This sequence belongs to the 'GDSL' lipolytic enzyme family. Expressed in most tissues or organs of the mature seedlings. Not expressed in roots of mature seedlings.

Its subcellular location is the secreted. The enzyme catalyses O-sinapoylcholine + H2O = (E)-sinapate + choline + H(+). Inhibited by PMSF. Its function is as follows. Sinapine esterase that catalyzes that hydrolysis of sinapine, releasing choline and sinapate. Sinapine (O-sinapoylcholine) is the predominant phenolic compound in a complex group of sinapate esters in seeds of oilseed rape (B.napus). Sinapine has antinutritive activity and prevents the use of seed protein for food and feed. Shows broad substrate specificity towards various other choline esters, including phosphatidylcholine. The protein is Sinapine esterase of Brassica napus (Rape).